The following is a 211-amino-acid chain: Uridine kinase (211 aa).

13–20 provides a ligand contact to ATP; the sequence is GASASGKS.

It belongs to the uridine kinase family.

It localises to the cytoplasm. The enzyme catalyses uridine + ATP = UMP + ADP + H(+). The catalysed reaction is cytidine + ATP = CMP + ADP + H(+). Its pathway is pyrimidine metabolism; CTP biosynthesis via salvage pathway; CTP from cytidine: step 1/3. It participates in pyrimidine metabolism; UMP biosynthesis via salvage pathway; UMP from uridine: step 1/1. This chain is Uridine kinase, found in Shewanella pealeana (strain ATCC 700345 / ANG-SQ1).